A 280-amino-acid chain; its full sequence is L-proline cis-4-hydroxylase (280 aa).

Residues His106, Asp108, and His154 each coordinate Fe cation. Arg164 contributes to the 2-oxoglutarate binding site.

The protein belongs to the L-proline cis-4-/cis-3-hydroxylase family. Requires Fe(2+) as cofactor.

It carries out the reaction L-proline + 2-oxoglutarate + O2 = cis-4-hydroxy-L-proline + succinate + CO2. Inhibited by metal ions such as Co(2+), Zn(2+), Cu(2+) or Ni(2+). Is also inhibited by EDTA or diethylpyrocarbonate (DEPC) in vitro. Unlike the procollagen-proline cis-3- and trans-4-hydroxylases from mammals, does not necessarily require L-ascorbate for activity although it does increase the activity of the enzyme. Functionally, dioxygenase that catalyzes the 2-oxoglutarate-dependent selective hydroxylation of free L-proline to cis-4-hydroxy-L-proline (cis-4-Hyp). The protein is L-proline cis-4-hydroxylase of Rhizobium meliloti (strain 1021) (Ensifer meliloti).